The chain runs to 274 residues: Putative septum site-determining protein MinD (274 aa).

22–29 (KGGVGKTT) contacts ATP.

The protein belongs to the ParA family. MinD subfamily.

It is found in the plastid. The protein localises to the chloroplast. In terms of biological role, ATPase required for the correct placement of the division site. The sequence is that of Putative septum site-determining protein MinD (minD-A) from Nephroselmis olivacea (Green alga).